A 473-amino-acid polypeptide reads, in one-letter code: Bifunctional protein HldE (473 aa).

Residues 1-317 form a ribokinase region; sequence MKLSMPRFDQ…RRAVQREQGS (317 aa). 194–197 lines the ATP pocket; that stretch reads NLSE. Aspartate 263 is a catalytic residue. Residues 343 to 473 are cytidylyltransferase; the sequence is FTNGCFDILH…TAIVEKIRQR (131 aa).

In the N-terminal section; belongs to the carbohydrate kinase PfkB family. The protein in the C-terminal section; belongs to the cytidylyltransferase family. As to quaternary structure, homodimer.

It carries out the reaction D-glycero-beta-D-manno-heptose 7-phosphate + ATP = D-glycero-beta-D-manno-heptose 1,7-bisphosphate + ADP + H(+). The catalysed reaction is D-glycero-beta-D-manno-heptose 1-phosphate + ATP + H(+) = ADP-D-glycero-beta-D-manno-heptose + diphosphate. It functions in the pathway nucleotide-sugar biosynthesis; ADP-L-glycero-beta-D-manno-heptose biosynthesis; ADP-L-glycero-beta-D-manno-heptose from D-glycero-beta-D-manno-heptose 7-phosphate: step 1/4. Its pathway is nucleotide-sugar biosynthesis; ADP-L-glycero-beta-D-manno-heptose biosynthesis; ADP-L-glycero-beta-D-manno-heptose from D-glycero-beta-D-manno-heptose 7-phosphate: step 3/4. Its function is as follows. Catalyzes the phosphorylation of D-glycero-D-manno-heptose 7-phosphate at the C-1 position to selectively form D-glycero-beta-D-manno-heptose-1,7-bisphosphate. Functionally, catalyzes the ADP transfer from ATP to D-glycero-beta-D-manno-heptose 1-phosphate, yielding ADP-D-glycero-beta-D-manno-heptose. This Pseudomonas aeruginosa (strain LESB58) protein is Bifunctional protein HldE.